The sequence spans 327 residues: Annexin A8 (327 aa).

Annexin repeat units follow at residues 21 to 92, 93 to 164, 177 to 249, and 253 to 324; these read FNPD…ALMY, PPYR…CLLQ, GLAL…TVVK, and NLHS…SLVG. Ca(2+) contacts are provided by Met266, Gly268, Gly270, and Asp310.

The protein belongs to the annexin family.

Functionally, this protein is an anticoagulant protein that acts as an indirect inhibitor of the thromboplastin-specific complex, which is involved in the blood coagulation cascade. This chain is Annexin A8 (ANXA8), found in Pan troglodytes (Chimpanzee).